Here is a 105-residue protein sequence, read N- to C-terminus: UPF0145 protein jk0060 (105 aa).

It belongs to the UPF0145 family.

The sequence is that of UPF0145 protein jk0060 from Corynebacterium jeikeium (strain K411).